Here is a 229-residue protein sequence, read N- to C-terminus: Transmembrane emp24 domain-containing protein 5 (229 aa).

The signal sequence occupies residues 1 to 27 (MGDKIWLPFPVLLLAALPPVLLPGAAG). Topologically, residues 28–196 (FTPSLDSDFT…IQESNFDRVN (169 aa)) are lumenal. Positions 45 to 126 (RECFYQPMPL…EKVIFFELIL (82 aa)) constitute a GOLD domain. Residues 197 to 217 (FWSMVNLVVMVVVSAIQVYML) traverse the membrane as a helical segment. At 218 to 229 (KSLFEDKRKSRT) the chain is on the cytoplasmic side.

It belongs to the EMP24/GP25L family. In terms of assembly, interacts with TMED9 and TMED10.

It is found in the endoplasmic reticulum membrane. It localises to the golgi apparatus. Its subcellular location is the cis-Golgi network membrane. The protein localises to the endoplasmic reticulum-Golgi intermediate compartment membrane. Potential role in vesicular protein trafficking, mainly in the early secretory pathway. Required for the maintenance of the Golgi apparatus; involved in protein exchange between Golgi stacks during assembly. Probably not required for COPI-vesicle-mediated retrograde transport. The chain is Transmembrane emp24 domain-containing protein 5 (TMED5) from Pongo abelii (Sumatran orangutan).